The primary structure comprises 41 residues: Large ribosomal subunit protein bL36 (41 aa).

The protein belongs to the bacterial ribosomal protein bL36 family.

The protein is Large ribosomal subunit protein bL36 of Rickettsia canadensis (strain McKiel).